The primary structure comprises 131 residues: Type IV wide pilus major component PilA4 (131 aa).

Residues 1 to 6 (MRNAKG) constitute a propeptide, leader sequence. At Phe7 the chain carries N-methylphenylalanine. Residues 7 to 27 (FTLIELLIVIAIIAILAAVLI) form a helical membrane-spanning segment. A disulfide bridge connects residues Cys95 and Cys130.

Interacts with PilQ. In terms of processing, found in three forms of 14-kDa, 18-kDa and a glycosylated 23-kDa form. Both narrow and wide pili are glycosylated.

It localises to the cell inner membrane. Its subcellular location is the cell outer membrane. The protein resides in the periplasm. In terms of biological role, plays an essential role in the assembly of two types of T4P pili: a wide and a narrow that participate in natural transformation and twitching motility. Major component of the wide pilus that is essential for natural transformation working as a DNA translocator structure that spans the inner and outer membranes. In addition, participates in the assembly of the narrow pilus composed of the PilA5 subunit that is required for twitching motility. The sequence is that of Type IV wide pilus major component PilA4 (pilA4) from Thermus thermophilus (strain ATCC BAA-163 / DSM 7039 / HB27).